The chain runs to 264 residues: Thymidylate synthase (264 aa).

Residue R21 coordinates dUMP. H51 is a (6R)-5,10-methylene-5,6,7,8-tetrahydrofolate binding site. DUMP is bound at residue R126–R127. Residue C146 is the Nucleophile of the active site. DUMP is bound by residues R166 to D169, N177, and H207 to Y209. D169 is a (6R)-5,10-methylene-5,6,7,8-tetrahydrofolate binding site. A263 lines the (6R)-5,10-methylene-5,6,7,8-tetrahydrofolate pocket.

Belongs to the thymidylate synthase family. Bacterial-type ThyA subfamily. Homodimer.

It localises to the cytoplasm. It carries out the reaction dUMP + (6R)-5,10-methylene-5,6,7,8-tetrahydrofolate = 7,8-dihydrofolate + dTMP. It functions in the pathway pyrimidine metabolism; dTTP biosynthesis. Its function is as follows. Catalyzes the reductive methylation of 2'-deoxyuridine-5'-monophosphate (dUMP) to 2'-deoxythymidine-5'-monophosphate (dTMP) while utilizing 5,10-methylenetetrahydrofolate (mTHF) as the methyl donor and reductant in the reaction, yielding dihydrofolate (DHF) as a by-product. This enzymatic reaction provides an intracellular de novo source of dTMP, an essential precursor for DNA biosynthesis. This is Thymidylate synthase from Bacteroides thetaiotaomicron (strain ATCC 29148 / DSM 2079 / JCM 5827 / CCUG 10774 / NCTC 10582 / VPI-5482 / E50).